A 624-amino-acid polypeptide reads, in one-letter code: Chaperone protein HtpG (624 aa).

An a; substrate-binding region spans residues 1-338 (MNNKNKITHT…SQDLPLNISR (338 aa)). Residues 339-552 (EILQDSSITH…TNDMSTQMAK (214 aa)) are b. Residues 553–624 (IFSAAGQPIP…IQRINNFFIS (72 aa)) form a c region.

Belongs to the heat shock protein 90 family. As to quaternary structure, homodimer.

It is found in the cytoplasm. Molecular chaperone. Has ATPase activity. The chain is Chaperone protein HtpG from Buchnera aphidicola subsp. Cinara cedri (strain Cc).